The following is a 204-amino-acid chain: Peptidyl-tRNA hydrolase (204 aa).

A tRNA-binding site is contributed by Tyr14. The Proton acceptor role is filled by His19. Positions 64, 66, and 112 each coordinate tRNA.

The protein belongs to the PTH family. As to quaternary structure, monomer.

It localises to the cytoplasm. The enzyme catalyses an N-acyl-L-alpha-aminoacyl-tRNA + H2O = an N-acyl-L-amino acid + a tRNA + H(+). In terms of biological role, hydrolyzes ribosome-free peptidyl-tRNAs (with 1 or more amino acids incorporated), which drop off the ribosome during protein synthesis, or as a result of ribosome stalling. Catalyzes the release of premature peptidyl moieties from peptidyl-tRNA molecules trapped in stalled 50S ribosomal subunits, and thus maintains levels of free tRNAs and 50S ribosomes. The protein is Peptidyl-tRNA hydrolase of Azorhizobium caulinodans (strain ATCC 43989 / DSM 5975 / JCM 20966 / LMG 6465 / NBRC 14845 / NCIMB 13405 / ORS 571).